The chain runs to 382 residues: Mannitol-1-phosphate 5-dehydrogenase (382 aa).

3–14 (ALHFGAGNIGRG) serves as a coordination point for NAD(+). An N6-acetyllysine modification is found at Lys-269.

It belongs to the mannitol dehydrogenase family.

It carries out the reaction D-mannitol 1-phosphate + NAD(+) = beta-D-fructose 6-phosphate + NADH + H(+). This chain is Mannitol-1-phosphate 5-dehydrogenase, found in Escherichia coli O81 (strain ED1a).